The following is a 691-amino-acid chain: MSRTVPIEKQRNIGIMAHIDAGKTTTTERILYYTGVSHKIGETHDGASTMDWMEQEQERGITITSAATTCFWDGYRINIIDTPGHVDFTIEVERSLRVLDGAVAVFDAVAGVEPQSETVWRQANRYGVPRVCFVNKMDRIGANFFRCVDMIQERLRAKPVCLQLPIGAEDNFEGIIDLIHGVSLKFDKETKGLEVERGPIPPELMELYQEKRLEMMEAAAEEDEVLLAKYLEGTELTAEEIIACIRKATIEQRLVPVLCGSAFRNIGVQPLLDAVVQYLPSPLDIPQMVGHNPNSPEEEIVCHCSDKEPLAGLVFKLASDPFIGHLSFFRIYSGFVESGMTVLNTTTEKRERIGRLLKMHANKREDIKWAGAGDIVALVGLKQASTGDTLCDEKRPVILESLDIPEPVIEVAIEPKTKTDRDALSTGLNKLAKEDPSFRVKGNEETGQTLIAGMGELHLEIIVDRLLREFNVNANVGKPQVAYRETITKPGKSDTKYAKQSGGRGQYGHCVIEIEPNPGNGYTFINSISGGVIPKEYIPAIDKGIQDALKSGILAGFPVVDIKVNLVFGSYHEVDSSEQAFYVAGSMAIKDAMHKSNPILLEPIMDVEVVTPDDYLGDVMGDLNGRRGKVQSMEARSGAQAIRAQVPLSEMFGYATELRSRTQGRATFSMQFDHYERVPAAIAEEVIKSRS.

Residues 8–283 (EKQRNIGIMA…AVVQYLPSPL (276 aa)) enclose the tr-type G domain. Residues 17-24 (AHIDAGKT), 81-85 (DTPGH), and 135-138 (NKMD) each bind GTP.

It belongs to the TRAFAC class translation factor GTPase superfamily. Classic translation factor GTPase family. EF-G/EF-2 subfamily.

Its subcellular location is the cytoplasm. Catalyzes the GTP-dependent ribosomal translocation step during translation elongation. During this step, the ribosome changes from the pre-translocational (PRE) to the post-translocational (POST) state as the newly formed A-site-bound peptidyl-tRNA and P-site-bound deacylated tRNA move to the P and E sites, respectively. Catalyzes the coordinated movement of the two tRNA molecules, the mRNA and conformational changes in the ribosome. The protein is Elongation factor G of Lawsonia intracellularis (strain PHE/MN1-00).